The sequence spans 609 residues: (R)-linalool synthase TPS5, chloroplastic (609 aa).

The transit peptide at 1 to 42 (MVSILSNIGMMVVTFKRPSLFTSLRRRSANNIIITKHSHPIS) directs the protein to the chloroplast. Residues Arg325, Asp362, Asp366, Arg503, and Asp506 each contribute to the (2E)-geranyl diphosphate site. Residues Asp362 and Asp366 each coordinate Mg(2+). Residues 362 to 366 (DDIYD) carry the DDXXD motif motif. Residues Asp506, Thr510, and Glu514 each contribute to the Mg(2+) site.

The protein belongs to the terpene synthase family. Tpsb subfamily. Mg(2+) is required as a cofactor. The cofactor is Mn(2+). In terms of tissue distribution, highly expressed in young fruits and plant tops. Expressed in flower buds and trichomes of petioles and stems. Expressed at low levels in young leaves, stems, petioles, sepals and petals.

Its subcellular location is the plastid. The protein localises to the chloroplast. The catalysed reaction is (2E)-geranyl diphosphate + H2O = (R)-linalool + diphosphate. It catalyses the reaction (2E,6E)-farnesyl diphosphate + H2O = (6E)-nerolidol + diphosphate. Its pathway is secondary metabolite biosynthesis; terpenoid biosynthesis. Its function is as follows. Involved in monoterpene (C10) biosynthesis in glandular trichomes. Converts geranyl diphosphate to linalool in glandular trichomes in response to jasmonate (JA). Can convert farnesyl diphosphate to nerolidol in vitro. This chain is (R)-linalool synthase TPS5, chloroplastic, found in Solanum lycopersicum (Tomato).